A 142-amino-acid polypeptide reads, in one-letter code: Small ribosomal subunit protein bS6 (142 aa).

Over residues 110–133 (NKKPSHAKEKHEKTEHTHSHHTEE) the composition is skewed to basic and acidic residues. The segment at 110-142 (NKKPSHAKEKHEKTEHTHSHHTEETESVGSHSK) is disordered.

Belongs to the bacterial ribosomal protein bS6 family.

Its function is as follows. Binds together with bS18 to 16S ribosomal RNA. The sequence is that of Small ribosomal subunit protein bS6 from Helicobacter pylori (strain Shi470).